The sequence spans 230 residues: Somatolactin (230 aa).

An N-terminal signal peptide occupies residues 1-23 (MMTAVKQSGVWAVLLWPYLLAVS). Cystine bridges form between Cys-28–Cys-38, Cys-88–Cys-204, and Cys-221–Cys-229. 2 N-linked (GlcNAc...) asparagine glycosylation sites follow: Asn-34 and Asn-144.

It belongs to the somatotropin/prolactin family. As to expression, pituitary gland.

It localises to the secreted. This Solea senegalensis (Senegalese sole) protein is Somatolactin.